The sequence spans 67 residues: Alpha-actitoxin-Ms11a-3 (67 aa).

The N-terminal stretch at 1 to 24 (MASKIFFVLAVFLVMSAVLPESFA) is a signal peptide. Disulfide bonds link Cys-26-Cys-41, Cys-33-Cys-46, and Cys-40-Cys-61. At Lys-66 the chain carries Lysine amide.

It localises to the secreted. It is found in the nematocyst. Alpha-toxins act on postsynaptic membranes, they bind to the nicotinic acetylcholine receptors (nAChR) and thus inhibit them. This toxin shows inhibition against mouse alpha-1-beta-1-delta-epsilon (CHRNA1-CHRNB1-CHRND-CHRNE) (IC(50)=1215 nM), rat alpha-3-beta-4/CHRNA3-CHRNB4 (IC(50)=5.173 uM), rat alpha-7/CHRNA7 (IC(50)=4.786 uM), human alpha-7/CHRNA7 (IC(50)=8.869 uM), and rat alpha-9-alpha-10/CHRNA9-CHRNA10 (IC(50)=202 nM). Also competes with alpha-bungarotoxin for binding to orthosteric sites on muscle-type T.carlifornicus (IC(50)=256 nM) and human alpha-7/CHRNA7 nAChRs (IC(50)=19.81 uM). In Metridium senile (Brown sea anemone), this protein is Alpha-actitoxin-Ms11a-3.